The chain runs to 440 residues: tRNA modification GTPase MnmE (440 aa).

Arg-23, Glu-80, and Lys-120 together coordinate (6S)-5-formyl-5,6,7,8-tetrahydrofolate. The TrmE-type G domain occupies 217 to 366; it reads GLKIVIAGEP…LLAMLQAHLP (150 aa). Residue Asn-227 participates in K(+) binding. GTP-binding positions include 227-232, 246-252, and 271-274; these read NAGKSS, TEIAGTT, and DTAG. Residue Ser-231 coordinates Mg(2+). K(+)-binding residues include Thr-246, Ile-248, and Thr-251. Thr-252 serves as a coordination point for Mg(2+). Lys-440 contacts (6S)-5-formyl-5,6,7,8-tetrahydrofolate.

It belongs to the TRAFAC class TrmE-Era-EngA-EngB-Septin-like GTPase superfamily. TrmE GTPase family. In terms of assembly, homodimer. Heterotetramer of two MnmE and two MnmG subunits. Requires K(+) as cofactor.

It is found in the cytoplasm. Functionally, exhibits a very high intrinsic GTPase hydrolysis rate. Involved in the addition of a carboxymethylaminomethyl (cmnm) group at the wobble position (U34) of certain tRNAs, forming tRNA-cmnm(5)s(2)U34. The chain is tRNA modification GTPase MnmE from Sinorhizobium medicae (strain WSM419) (Ensifer medicae).